We begin with the raw amino-acid sequence, 295 residues long: MVDATSPPGVNAVVNYYVPNSDGSPPATNDMAVMLGQKDMISHKMRIRDLRPYKEEYSLDRNGFQYATIHSTLTDATDETQIKEVYYREIEKLVQDITGAKRVLAFHHAVRTRTGNEFGEQIKDRYQGVEGPAYRVHIDQTPQGALSIVQFMFPDLADDVRNGSFQVINVWRPLTRVQRDPLMVADAAEMPPEDLLLISRKYYNGLHSSNFVIKYDGRMAAGEGPTDGLSGDGKHSWWYIGDQEPTEALVFSSSGFRNGKAIIGTAHDLYSAEPMINAYERKNASSLYGHDESQI.

It belongs to the asaB hydroxylase/desaturase family.

It participates in secondary metabolite biosynthesis; terpenoid biosynthesis. In terms of biological role, oxidoreductase; part of the gene cluster that mediates the biosynthesis of the diterpene ent-pimara-8(14),15-diene (PD). Within the cluster, the HMG-CoA reductase AN1593 functions in the mevalonate pathway, which produces isoprenoid precursors. The geranylgeranyl pyrophosphate (GGPP) synthase AN1592 is needed in the formation of GGPP, the precursor for diterpenes. Lastly, the pimaradiene synthase pbcA performs the 2 cyclization steps that convert GGPP to ent-pimara-8(14),15-diene. The putative roles of the remaining cluster enzymes in ent-pimara-8(14),15-diene biosynthesis is unclear. The cytochrome P450 monooxygenase AN1598, the glutathione S-transferase AN1595, the oxidoreductases AN1596 and AN1597 probably function as decorative enzymes. It is possible that in biological conditions the compound is oxidized to ent-pimara-8(14),15-dien-19-oic acid, which is a bioactive diterpene compound predominant in many plant extracts. The sequence is that of Oxidoreductase AN1597 from Emericella nidulans (strain FGSC A4 / ATCC 38163 / CBS 112.46 / NRRL 194 / M139) (Aspergillus nidulans).